We begin with the raw amino-acid sequence, 607 residues long: Thymidine kinase (607 aa).

Disordered regions lie at residues 1–160 (MAGF…ADST) and 180–215 (DDKSDCESEDESNFRRPSSHSALKQKNGGKGKPSGL). The span at 17–32 (KCQEDESPENERHENF) shows a compositional bias: basic and acidic residues. Composition is skewed to polar residues over residues 88–106 (AAVTSNTGNSPGSRHTSCP), 148–160 (RKTSCTEGGADST), and 194–203 (RRPSSHSALK). 291–298 (GAPGVGKT) provides a ligand contact to ATP. Catalysis depends on E317, which acts as the Proton acceptor. Q355 contributes to the substrate binding site. Residue R445 coordinates ATP. R451 provides a ligand contact to substrate.

It belongs to the herpesviridae thymidine kinase family. Homodimer.

It is found in the virion tegument. The protein localises to the host nucleus. The catalysed reaction is thymidine + ATP = dTMP + ADP + H(+). In terms of biological role, catalyzes the transfer of the gamma-phospho group of ATP to thymidine to generate dTMP in the salvage pathway of pyrimidine synthesis. The dTMP serves as a substrate for DNA polymerase during viral DNA replication. Allows the virus to be reactivated and to grow in non-proliferative cells lacking a high concentration of phosphorylated nucleic acid precursors. This Epstein-Barr virus (strain GD1) (HHV-4) protein is Thymidine kinase.